We begin with the raw amino-acid sequence, 855 residues long: Suppressor of tumorigenicity 14 protein (855 aa).

A disordered region spans residues M1–L20. Residues M1–W55 lie on the Cytoplasmic side of the membrane. A helical; Signal-anchor for type II membrane protein membrane pass occupies residues V56–V76. At W77–V855 the chain is on the extracellular side. The SEA domain occupies V86–S203. N109 carries an N-linked (GlcNAc...) asparagine glycan. C214 and C244 are disulfide-bonded. CUB domains follow at residues C214–L334 and C340–Y447. A glycan (N-linked (GlcNAc...) asparagine) is linked at N302. Disulfide bonds link C340/C366, C397/C410, C453/C464, C459/C477, C471/C486, C488/C501, C496/C514, C508/C523, C525/C537, C532/C550, C544/C559, C567/C579, C574/C593, C587/C602, and C641/C657. LDL-receptor class A domains lie at P452 to S487, S487 to S524, S524 to P560, and T566 to D603. A glycan (N-linked (GlcNAc...) asparagine) is linked at N485. Residues V615–G854 form the Peptidase S1 domain. Residues H656 and D711 each act as charge relay system in the active site. The N-linked (GlcNAc...) asparagine glycan is linked to N772. Disulfide bonds link C776–C790 and C801–C830. S805 functions as the Charge relay system in the catalytic mechanism.

This sequence belongs to the peptidase S1 family. As to quaternary structure, interacts with CDCP1. May interact with TMEFF1. Interacts with iripin-3, a serine protease inhibitor from Ixodes ricinus saliva. Interacts with iripin-1, a serine protease inhibitor from Ixodes ricinus saliva.

It localises to the membrane. It catalyses the reaction Cleaves various synthetic substrates with Arg or Lys at the P1 position and prefers small side-chain amino acids, such as Ala and Gly, at the P2 position.. Functionally, exhibits trypsin-like activity as defined by cleavage of synthetic substrates with Arg or Lys as the P1 site. Involved in the terminal differentiation of keratinocytes through prostasin (PRSS8) activation and filaggrin (FLG) processing. Proteolytically cleaves and therefore activates TMPRSS13. In Homo sapiens (Human), this protein is Suppressor of tumorigenicity 14 protein (ST14).